Consider the following 67-residue polypeptide: ATP synthase F(0) complex subunit 8 (67 aa).

A helical transmembrane segment spans residues 8 to 24 (TWFITIVSMLLSLFILM). K54 is modified (N6-acetyllysine; alternate). K54 bears the N6-succinyllysine; alternate mark. The residue at position 57 (K57) is an N6-acetyllysine.

This sequence belongs to the ATPase protein 8 family. As to quaternary structure, component of the ATP synthase complex composed at least of ATP5F1A/subunit alpha, ATP5F1B/subunit beta, ATP5MC1/subunit c (homooctomer), MT-ATP6/subunit a, MT-ATP8/subunit 8, ATP5ME/subunit e, ATP5MF/subunit f, ATP5MG/subunit g, ATP5MK/subunit k, ATP5MJ/subunit j, ATP5F1C/subunit gamma, ATP5F1D/subunit delta, ATP5F1E/subunit epsilon, ATP5PF/subunit F6, ATP5PB/subunit b, ATP5PD/subunit d, ATP5PO/subunit OSCP. ATP synthase complex consists of a soluble F(1) head domain (subunits alpha(3) and beta(3)) - the catalytic core - and a membrane F(0) domain - the membrane proton channel (subunits c, a, 8, e, f, g, k and j). These two domains are linked by a central stalk (subunits gamma, delta, and epsilon) rotating inside the F1 region and a stationary peripheral stalk (subunits F6, b, d, and OSCP). Interacts with PRICKLE3.

The protein localises to the mitochondrion membrane. Functionally, subunit 8, of the mitochondrial membrane ATP synthase complex (F(1)F(0) ATP synthase or Complex V) that produces ATP from ADP in the presence of a proton gradient across the membrane which is generated by electron transport complexes of the respiratory chain. ATP synthase complex consist of a soluble F(1) head domain - the catalytic core - and a membrane F(1) domain - the membrane proton channel. These two domains are linked by a central stalk rotating inside the F(1) region and a stationary peripheral stalk. During catalysis, ATP synthesis in the catalytic domain of F(1) is coupled via a rotary mechanism of the central stalk subunits to proton translocation. In vivo, can only synthesize ATP although its ATP hydrolase activity can be activated artificially in vitro. Part of the complex F(0) domain. The sequence is that of ATP synthase F(0) complex subunit 8 from Dasypus novemcinctus (Nine-banded armadillo).